A 400-amino-acid chain; its full sequence is Enoyl-[acyl-carrier-protein] reductase [NADH] (400 aa).

Residues 48 to 53 (GSSSGY), 74 to 75 (FE), 111 to 112 (DA), and 139 to 140 (LA) contribute to the NAD(+) site. Residue Tyr-225 coordinates substrate. Tyr-235 (proton donor) is an active-site residue. NAD(+) is bound by residues Lys-244 and 273–275 (VVT).

Belongs to the TER reductase family. As to quaternary structure, monomer.

It carries out the reaction a 2,3-saturated acyl-[ACP] + NAD(+) = a (2E)-enoyl-[ACP] + NADH + H(+). It functions in the pathway lipid metabolism; fatty acid biosynthesis. Involved in the final reduction of the elongation cycle of fatty acid synthesis (FAS II). Catalyzes the reduction of a carbon-carbon double bond in an enoyl moiety that is covalently linked to an acyl carrier protein (ACP). This chain is Enoyl-[acyl-carrier-protein] reductase [NADH], found in Shewanella oneidensis (strain ATCC 700550 / JCM 31522 / CIP 106686 / LMG 19005 / NCIMB 14063 / MR-1).